The sequence spans 434 residues: Trigger factor (434 aa).

Positions 162-247 constitute a PPIase FKBP-type domain; it reads GDKINISLIA…FNTVEQAKLP (86 aa).

The protein belongs to the FKBP-type PPIase family. Tig subfamily.

The protein localises to the cytoplasm. The catalysed reaction is [protein]-peptidylproline (omega=180) = [protein]-peptidylproline (omega=0). Functionally, involved in protein export. Acts as a chaperone by maintaining the newly synthesized protein in an open conformation. Functions as a peptidyl-prolyl cis-trans isomerase. The protein is Trigger factor of Methylobacillus flagellatus (strain ATCC 51484 / DSM 6875 / VKM B-1610 / KT).